Reading from the N-terminus, the 179-residue chain is ATP synthase subunit delta (179 aa).

The protein belongs to the ATPase delta chain family. As to quaternary structure, F-type ATPases have 2 components, F(1) - the catalytic core - and F(0) - the membrane proton channel. F(1) has five subunits: alpha(3), beta(3), gamma(1), delta(1), epsilon(1). F(0) has three main subunits: a(1), b(2) and c(10-14). The alpha and beta chains form an alternating ring which encloses part of the gamma chain. F(1) is attached to F(0) by a central stalk formed by the gamma and epsilon chains, while a peripheral stalk is formed by the delta and b chains.

The protein resides in the cell membrane. Its function is as follows. F(1)F(0) ATP synthase produces ATP from ADP in the presence of a proton or sodium gradient. F-type ATPases consist of two structural domains, F(1) containing the extramembraneous catalytic core and F(0) containing the membrane proton channel, linked together by a central stalk and a peripheral stalk. During catalysis, ATP synthesis in the catalytic domain of F(1) is coupled via a rotary mechanism of the central stalk subunits to proton translocation. In terms of biological role, this protein is part of the stalk that links CF(0) to CF(1). It either transmits conformational changes from CF(0) to CF(1) or is implicated in proton conduction. The chain is ATP synthase subunit delta from Staphylococcus aureus (strain bovine RF122 / ET3-1).